A 164-amino-acid chain; its full sequence is 6,7-dimethyl-8-ribityllumazine synthase (164 aa).

5-amino-6-(D-ribitylamino)uracil contacts are provided by residues Y27, A58–E60, and C87–I89. Position 92–93 (E92–T93) interacts with (2S)-2-hydroxy-3-oxobutyl phosphate. Catalysis depends on H95, which acts as the Proton donor. N120 serves as a coordination point for 5-amino-6-(D-ribitylamino)uracil. R134 contributes to the (2S)-2-hydroxy-3-oxobutyl phosphate binding site.

This sequence belongs to the DMRL synthase family.

The enzyme catalyses (2S)-2-hydroxy-3-oxobutyl phosphate + 5-amino-6-(D-ribitylamino)uracil = 6,7-dimethyl-8-(1-D-ribityl)lumazine + phosphate + 2 H2O + H(+). It functions in the pathway cofactor biosynthesis; riboflavin biosynthesis; riboflavin from 2-hydroxy-3-oxobutyl phosphate and 5-amino-6-(D-ribitylamino)uracil: step 1/2. Its function is as follows. Catalyzes the formation of 6,7-dimethyl-8-ribityllumazine by condensation of 5-amino-6-(D-ribitylamino)uracil with 3,4-dihydroxy-2-butanone 4-phosphate. This is the penultimate step in the biosynthesis of riboflavin. The protein is 6,7-dimethyl-8-ribityllumazine synthase of Methylocella silvestris (strain DSM 15510 / CIP 108128 / LMG 27833 / NCIMB 13906 / BL2).